The primary structure comprises 240 residues: Putative cytochrome c-type biogenesis protein DbsD-like (240 aa).

Transmembrane regions (helical) follow at residues 32 to 52, 74 to 94, 104 to 124, 149 to 169, 176 to 196, and 218 to 238; these read FVFF…ILPI, FFFC…ATLL, GIPV…LNIV, VGIG…LLIW, LFIG…PIII, and APFS…SSIL.

The protein belongs to the DsbD family.

The protein resides in the plastid. It localises to the chloroplast membrane. In terms of biological role, could be involved in cytochrome c synthesis. The polypeptide is Putative cytochrome c-type biogenesis protein DbsD-like (Porphyra purpurea (Red seaweed)).